The sequence spans 247 residues: MDRSIAKMLSNQQIRNFSRGVGHLRRRAAKNNVIKVRPEELRPFFNQYSVLPNGIQNDADAKLFSKELQPGERKLLFDALRKITADQYNDHKKVVEVTIDHEDLVKVWYINFIPMFVYGCLDEAFLIIGGESINNIFSVYNGMSMLASAAVANIICNLFLQLPADRINDVLGFKKPVLSVDQMNIPEYQYAAFGAKLSGLWMGLTLGMLPLFFIDDNLDNRASDNGDLLVSVANTNGDEYCELFCGD.

Helical transmembrane passes span 108–128 (WYIN…FLII), 136–156 (IFSV…NIIC), and 194–214 (GAKL…LFFI).

It localises to the membrane. This is an uncharacterized protein from Caenorhabditis elegans.